Here is a 211-residue protein sequence, read N- to C-terminus: Stromal cell-derived factor 2 (211 aa).

Positions 1–18 are cleaved as a signal peptide; the sequence is MAVLSLLLLGGLWSAVGA. 3 MIR domains span residues 21–75, 83–138, and 139–193; these read MAVV…IRGK, GTPI…VLCN, and GPYW…AMEG.

In terms of tissue distribution, ubiquitously expressed with highest expression in liver and kidney.

The protein resides in the secreted. This chain is Stromal cell-derived factor 2 (Sdf2), found in Mus musculus (Mouse).